A 250-amino-acid polypeptide reads, in one-letter code: Formylaminopyrimidine transport permease protein ThiX (250 aa).

The next 6 helical transmembrane spans lie at 5 to 25 (YQALEPTLFFLMLMVIWEISA), 62 to 82 (IISIGLALSIVLGILLSLLMF), 94 to 114 (LLVASQTIPVIALAPIFVLWF), 115 to 135 (GYSIWSKVAVTVLLTFFPITV), 172 to 192 (LPSFLTGLRIAVPLAVIGAAV), and 216 to 236 (PGVFAPIFILSLLGILGFAAI). Residues 56 to 237 (LPATLAIISI…LGILGFAAIK (182 aa)) form the ABC transmembrane type-1 domain.

Belongs to the binding-protein-dependent transport system permease family. In terms of assembly, the complex is likely composed of an ATP-binding protein (ThiZ), a transmembrane protein (ThiX) and a solute-binding protein (ThiY).

It is found in the cell membrane. Its pathway is cofactor biosynthesis; thiamine diphosphate biosynthesis. In terms of biological role, participates in a thiamine pyrimidine salvage pathway as part of the ABC transporter complex ThiXYZ involved in the import of thiamine degradation products such as the formylaminopyrimidine N-formyl-4-amino-5-aminomethyl-2-methylpyrimidine (FAMP). Is probably responsible for the translocation of the substrate across the membrane. The polypeptide is Formylaminopyrimidine transport permease protein ThiX (Halalkalibacterium halodurans (strain ATCC BAA-125 / DSM 18197 / FERM 7344 / JCM 9153 / C-125) (Bacillus halodurans)).